A 648-amino-acid polypeptide reads, in one-letter code: Probable alpha-galactosidase D (648 aa).

The N-terminal stretch at 1–17 (MESIVWLLLLSPALVAG) is a signal peptide. N84 and N90 each carry an N-linked (GlcNAc...) asparagine glycan. C123 and C156 are joined by a disulfide. D154 (nucleophile) is an active-site residue. 199 to 203 (EWGID) contacts substrate. D221 (proton donor) is an active-site residue. N-linked (GlcNAc...) asparagine glycans are attached at residues N339, N505, and N572.

It belongs to the glycosyl hydrolase 27 family.

It is found in the secreted. The enzyme catalyses Hydrolysis of terminal, non-reducing alpha-D-galactose residues in alpha-D-galactosides, including galactose oligosaccharides, galactomannans and galactolipids.. Its function is as follows. Hydrolyzes a variety of simple alpha-D-galactoside as well as more complex molecules such as oligosaccharides and polysaccharides. The sequence is that of Probable alpha-galactosidase D (aglD) from Neosartorya fischeri (strain ATCC 1020 / DSM 3700 / CBS 544.65 / FGSC A1164 / JCM 1740 / NRRL 181 / WB 181) (Aspergillus fischerianus).